Consider the following 1045-residue polypeptide: FERM, ARHGEF and pleckstrin domain-containing protein 1 (1045 aa).

The interval 1-37 is disordered; sequence MGEIEQRPTPGSRLGAPENSGISTLERGQKPPPTPSG. Ser-20 and Ser-23 each carry phosphoserine. A Phosphothreonine modification is found at Thr-24. Positions 40–320 constitute an FERM domain; that stretch reads VSIKIQMLDD…EHHAFFRLFE (281 aa). Residues Ser-340, Ser-373, Ser-389, Ser-403, Ser-418, Ser-427, and Ser-433 each carry the phosphoserine modification. The tract at residues 361–534 is disordered; it reads FERKHSKIHS…TDDEDEGRRK (174 aa). Over residues 373–396 the composition is skewed to polar residues; that stretch reads SLASQPTELNSEVLEQSQQSTSLT. 2 stretches are compositionally biased toward polar residues: residues 471-489 and 496-511; these read TGSL…NSQG and VTLS…QASP. A phosphoserine mark is found at Ser-510 and Ser-514. The region spanning 540-730 is the DH domain; that stretch reads KAYFIAKEVS…TEMVAQLHGT (191 aa). The 98-residue stretch at 759–856 folds into the PH 1 domain; it reads EFIRLGSLSK…WVEDIQMAID (98 aa). Ser-833, Ser-872, and Ser-878 each carry phosphoserine. The disordered stretch occupies residues 864–903; the sequence is PAPEFLASSPPDNKSPDEATAADQESEDDLSASRTSLERQ. Phosphothreonine is present on Thr-883. Ser-889, Ser-896, and Ser-899 each carry phosphoserine. Positions 932-1029 constitute a PH 2 domain; it reads ENQLSGNLLR…WMEVIRSATS (98 aa).

Interacts with CADM1. Interacts with RAC1. In terms of tissue distribution, detected in cAMP-treated chondrocytes, but not in untreated chondrocytes. Detected in fetal brain, heart and spleen, and in adult testis, kidney and lung.

It is found in the cell membrane. Its subcellular location is the synapse. The protein localises to the synaptosome. It localises to the cytoplasm. The protein resides in the cytosol. It is found in the cell projection. Its subcellular location is the filopodium. The protein localises to the dendrite. It localises to the dendritic spine. Its function is as follows. Functions as a guanine nucleotide exchange factor for RAC1. May play a role in semaphorin signaling. Plays a role in the assembly and disassembly of dendritic filopodia, the formation of dendritic spines, regulation of dendrite length and ultimately the formation of synapses. This chain is FERM, ARHGEF and pleckstrin domain-containing protein 1 (FARP1), found in Homo sapiens (Human).